The primary structure comprises 124 residues: UPF0337 protein blr1496 (124 aa).

Belongs to the UPF0337 (CsbD) family.

This is UPF0337 protein blr1496 from Bradyrhizobium diazoefficiens (strain JCM 10833 / BCRC 13528 / IAM 13628 / NBRC 14792 / USDA 110).